We begin with the raw amino-acid sequence, 1454 residues long: ABC transporter G family member 39 (1454 aa).

Residues 175 to 448 (LGFFHLLPSK…FEYFGFQCPE (274 aa)) enclose the ABC transporter 1 domain. 208-215 (GPPSSGKT) is a binding site for ATP. The ABC transmembrane type-2 1 domain occupies 526–739 (ELFKACFDRE…GQTAIVMNEF (214 aa)). 7 consecutive transmembrane segments (helical) span residues 544 to 564 (FVYV…MTVY), 584 to 604 (MFFS…FTVM), 623 to 643 (FALP…GIWI), 663 to 683 (LLAY…LGAI), 689 to 709 (ISNS…GFII), 716 to 736 (PWMT…AIVM), and 775 to 795 (FWIC…FYIL). Positions 812–824 (EEGKDKQKGENRG) are enriched in basic and acidic residues. The tract at residues 812–838 (EEGKDKQKGENRGTEGSVVELNSSSNK) is disordered. The ABC transporter 2 domain occupies 853–1106 (LAFNNVNYYV…LVEYFEAVEG (254 aa)). 898–905 (GVSGAGKT) provides a ligand contact to ATP. In terms of domain architecture, ABC transmembrane type-2 2 spans 1178 to 1392 (TQTKACFWKQ…TLYGLITSQV (215 aa)). 7 consecutive transmembrane segments (helical) span residues 1199–1219 (AIRF…FWQI), 1231–1251 (NFFG…AATV), 1285–1303 (IMYN…YSMI), 1312–1332 (FLWF…YGMM), 1342–1362 (IAGI…GFLI), 1367–1387 (IPIW…LYGL), and 1423–1443 (FLPV…FVFA).

The protein belongs to the ABC transporter superfamily. ABCG family. PDR (TC 3.A.1.205) subfamily.

Its subcellular location is the membrane. May be a general defense protein. This is ABC transporter G family member 39 (ABCG39) from Arabidopsis thaliana (Mouse-ear cress).